Reading from the N-terminus, the 603-residue chain is Serine/threonine-protein kinase HAL4/SAT4 (603 aa).

Polar residues-rich tracts occupy residues 1 to 15 (MTGMNDNNAAIPQQT), 30 to 60 (RSGSRSSRQGKASSNIQPPSNINTNVPSASK), and 68 to 85 (TPTTATPRVVSNPSNTAG). Disordered stretches follow at residues 1–86 (MTGM…TAGV), 150–171 (LSPKFSHHSNSNTAITPAPTPT), and 267–301 (DKYPEGAPTSGALNCPERDIYRSDQKDSKNNTHNI). A compositionally biased stretch (low complexity) spans 159–171 (NSNTAITPAPTPT). Residues 282-296 (PERDIYRSDQKDSKN) are compositionally biased toward basic and acidic residues. Residues 316 to 590 (GRCQEVLGKG…GKQILNSEWG (275 aa)) form the Protein kinase domain. ATP is bound by residues 322–330 (LGKGAFGVV) and Lys353. The active-site Proton acceptor is the Asp449.

It belongs to the protein kinase superfamily. Ser/Thr protein kinase family.

It carries out the reaction L-seryl-[protein] + ATP = O-phospho-L-seryl-[protein] + ADP + H(+). It catalyses the reaction L-threonyl-[protein] + ATP = O-phospho-L-threonyl-[protein] + ADP + H(+). Its function is as follows. Promotes K(+) uptake, by the potassium transporter TRK1-TRK2, which leads to the subsequent cellular resistance to toxic cations such as Na(+), Li(+) and Ca(2+). This Saccharomyces cerevisiae (strain ATCC 204508 / S288c) (Baker's yeast) protein is Serine/threonine-protein kinase HAL4/SAT4 (SAT4).